Consider the following 296-residue polypeptide: UDP-N-acetylglucosamine transporter TMEM241 (296 aa).

10 consecutive transmembrane segments (helical) span residues 7–29 (LVGL…VLSV), 32–52 (FTYP…LLHV), 67–87 (SHVL…YAGS), 93–113 (LAIP…CGYQ), 121–141 (TSPA…CLPF), 146–166 (FNPD…AYKI), 187–207 (IFSV…FSVL), 211–231 (FLYF…GFFL), 250–270 (WIFF…DAIL), and 271–291 (TSAT…LVFS).

Belongs to the nucleotide-sugar transporter family. SLC35A subfamily.

The protein localises to the golgi apparatus. It localises to the cis-Golgi network membrane. Its function is as follows. Golgi-localized UDP-N-acetylglucosamine (UDP-GlcNAc) transporter that transports UDP-N-acetylglucosamine into Golgi lumen. Contributes to lysosomal targeting of NPC2, a key protein required for lysosomal cholesterol exiting, and that utilizes the mannose-6-phosphate (M6P) modification pathway for its lysosomal targeting. This chain is UDP-N-acetylglucosamine transporter TMEM241, found in Homo sapiens (Human).